Consider the following 125-residue polypeptide: Large ribosomal subunit protein bL12 (125 aa).

Belongs to the bacterial ribosomal protein bL12 family. In terms of assembly, homodimer. Part of the ribosomal stalk of the 50S ribosomal subunit. Forms a multimeric L10(L12)X complex, where L10 forms an elongated spine to which 2 to 4 L12 dimers bind in a sequential fashion. Binds GTP-bound translation factors.

In terms of biological role, forms part of the ribosomal stalk which helps the ribosome interact with GTP-bound translation factors. Is thus essential for accurate translation. The chain is Large ribosomal subunit protein bL12 from Mesorhizobium japonicum (strain LMG 29417 / CECT 9101 / MAFF 303099) (Mesorhizobium loti (strain MAFF 303099)).